Reading from the N-terminus, the 327-residue chain is MEMQLGAMLYVYKGEYGLPSIDFECLRALCLLRFTRCPMDVQTSSNPLRSGAGKLPYLQIGNQKFAGYRQIKRVLDLEGYPIDAHLSTKQKHLSTAYANWVFTNLHAYYHYFLFGEPHNFDTTTRGLYAKRTPFPFNFYYPSSYQREACDVVQVMAGFDVNDKLDKHEGDYLVVNAKKVVNLLSRKLGRKVWFFGDTYSEFDAIVYSYLAIIFKIALPNNPLQNHIKGCQNLVNFINRITKDIFRIEGYSSVKLTKTPSGTEASLTASERKFLDSELNTKIVAGVGAVLAMGAFAAWRGIYNQLTTRSSTDYDGIDYEDDEMEEGLD.

Residues 281-301 (IVAGVGAVLAMGAFAAWRGIY) traverse the membrane as a helical segment.

The protein belongs to the metaxin family. As to quaternary structure, associates with the mitochondrial contact site and cristae organizing system (MICOS) complex (also known as MINOS or MitOS complex).

Its subcellular location is the mitochondrion outer membrane. Functionally, involved in transport of proteins into the mitochondrion. Essential for embryonic development. This is Metaxin-1 homolog from Drosophila melanogaster (Fruit fly).